The following is a 238-amino-acid chain: Gem-associated protein 8 (238 aa).

Residues Ala66–Glu127 are disordered. Composition is skewed to polar residues over residues Ser72 to Ser82 and Leu96 to Gly108. Residues Cys113 to Glu127 show a composition bias toward acidic residues. Ser122 is modified (phosphoserine). Residues Ser131–Leu164 are a coiled coil.

In terms of assembly, part of the core SMN complex that contains SMN1, GEMIN2/SIP1, DDX20/GEMIN3, GEMIN4, GEMIN5, GEMIN6, GEMIN7, GEMIN8 and STRAP/UNRIP. Part of the SMN-Sm complex that contains SMN1, GEMIN2/SIP1, DDX20/GEMIN3, GEMIN4, GEMIN5, GEMIN6, GEMIN7, GEMIN8, STRAP/UNRIP and the Sm proteins SNRPB, SNRPD1, SNRPD2, SNRPD3, SNRPE, SNRPF and SNRPG. Interacts with GEMIN6; the interaction is direct. Interacts with GEMIN7; the interaction is direct. Interacts with SMN1; the interaction is direct. Interacts with GEMIN4; the interaction is direct. As to expression, widely expressed in embryonic tissues (at protein level).

The protein resides in the nucleus. The protein localises to the gem. Its subcellular location is the cytoplasm. Its function is as follows. The SMN complex catalyzes the assembly of small nuclear ribonucleoproteins (snRNPs), the building blocks of the spliceosome, and thereby plays an important role in the splicing of cellular pre-mRNAs. Most spliceosomal snRNPs contain a common set of Sm proteins SNRPB, SNRPD1, SNRPD2, SNRPD3, SNRPE, SNRPF and SNRPG that assemble in a heptameric protein ring on the Sm site of the small nuclear RNA to form the core snRNP (Sm core). In the cytosol, the Sm proteins SNRPD1, SNRPD2, SNRPE, SNRPF and SNRPG are trapped in an inactive 6S pICln-Sm complex by the chaperone CLNS1A that controls the assembly of the core snRNP. To assemble core snRNPs, the SMN complex accepts the trapped 5Sm proteins from CLNS1A forming an intermediate. Binding of snRNA inside 5Sm triggers eviction of the SMN complex, thereby allowing binding of SNRPD3 and SNRPB to complete assembly of the core snRNP. This is Gem-associated protein 8 (Gemin8) from Mus musculus (Mouse).